We begin with the raw amino-acid sequence, 415 residues long: Corticotropin-releasing factor receptor 1 (415 aa).

The signal sequence occupies residues 1 to 23; that stretch reads MARHPQLRLVKALLLLGLNPVSA. Residues 24–111 lie on the Extracellular side of the membrane; sequence SLQDQHCESL…CQEILNEEKK (88 aa). Intrachain disulfides connect C30/C54, C44/C87, and C68/C102. Residues N38, N78, and N98 are each glycosylated (N-linked (GlcNAc...) asparagine). Residues 99 to 108 form an important for peptide agonist binding region; that stretch reads YSECQEILNE. Residues 112-142 traverse the membrane as a helical segment; the sequence is SKVHYHVAVIINYLGHCISLVALLVAFVLFL. Topologically, residues 143 to 149 are cytoplasmic; sequence RLRSIRC. Residues 150 to 174 traverse the membrane as a helical segment; sequence LRNIIHWNLISAFILRNATWFVVQL. The Extracellular portion of the chain corresponds to 175–189; sequence TMSPEVHQSNVGWCR. An intrachain disulfide couples C188 to C258. A helical membrane pass occupies residues 190–218; it reads LVTAAYNYFHVTNFFWMFGEGCYLHTAIV. Residues 219–225 are Cytoplasmic-facing; that stretch reads LTYSTDR. A helical membrane pass occupies residues 226-253; sequence LRKWMFICIGWGVPFPIIVAWAIGKLYY. At 254-269 the chain is on the extracellular side; it reads DNEKCWFGKRPGVYTD. A helical membrane pass occupies residues 270-295; sequence YIYQGPMILVLLINFIFLFNIVRILM. The interval 280 to 290 is important for antagonist binding; that stretch reads LLINFIFLFNI. The Cytoplasmic portion of the chain corresponds to 296 to 306; sequence TKLRASTTSET. S301 carries the phosphoserine; by PKA modification. A helical membrane pass occupies residues 307–331; sequence IQYRKAVKATLVLLPLLGITYMLFF. Residues 332-338 are Extracellular-facing; that stretch reads VNPGEDE. Residues 339–368 form a helical membrane-spanning segment; the sequence is VSRVVFIYFNSFLESFQGFFVSVFYCFLNS. Topologically, residues 369 to 415 are cytoplasmic; that stretch reads EVRSAIRKRWHRWQDKHSIRARVARAMSIPTSPTRVSFHSIKQSTAV.

It belongs to the G-protein coupled receptor 2 family. In terms of assembly, heterodimer; heterodimerizes with GPER1. Interacts (via N-terminal extracellular domain) with CRH and UCN. Interacts with DLG1; this inhibits endocytosis of CRHR1 after agonist binding. C-terminal Ser or Thr residues may be phosphorylated. In terms of processing, phosphorylation at Ser-301 by PKA prevents maximal coupling to Gq-protein, and thereby negatively regulates downstream signaling. Expressed abundantly in the pituitary, cerebral cortex, hippocampus, amygdala and cerebellum.

The protein localises to the cell membrane. It is found in the endosome. In terms of biological role, G-protein coupled receptor for CRH (corticotropin-releasing factor) and UCN (urocortin). Has high affinity for CRH and UCN. Ligand binding causes a conformation change that triggers signaling via guanine nucleotide-binding proteins (G proteins) and down-stream effectors, such as adenylate cyclase. Promotes the activation of adenylate cyclase, leading to increased intracellular cAMP levels. Inhibits the activity of the calcium channel CACNA1H. Required for normal embryonic development of the adrenal gland and for normal hormonal responses to stress. Plays a role in the response to anxiogenic stimuli. The chain is Corticotropin-releasing factor receptor 1 (CRHR1) from Macaca mulatta (Rhesus macaque).